The primary structure comprises 187 residues: MKNLILLFLLISIINLIQSLPLDSVINFYVNSTVGSCKGKQLEVSLDVCNNGCSNSFKITSSKDNVNNYNFTSYIETDDKQCLTNNYTINLFNCSIDNAALVGPYSVKCIFKETPSPSNSSNPSPSPNTTSSSSLSSSSLNSNEPNQTTKPPKTNEPQKNNSTSNIPNFFAIFGFLVLIIFILGDKI.

The N-terminal stretch at 1-19 (MKNLILLFLLISIINLIQS) is a signal peptide. N-linked (GlcNAc...) asparagine glycans are attached at residues asparagine 31, asparagine 70, asparagine 86, asparagine 93, asparagine 119, asparagine 128, asparagine 146, asparagine 160, and asparagine 161. Positions 115-146 (PSPSNSSNPSPSPNTTSSSSLSSSSLNSNEPN) are enriched in low complexity. Residues 115 to 161 (PSPSNSSNPSPSPNTTSSSSLSSSSLNSNEPNQTTKPPKTNEPQKNN) form a disordered region. Over residues 147 to 161 (QTTKPPKTNEPQKNN) the composition is skewed to polar residues. Asparagine 161 carries the GPI-like-anchor amidated asparagine lipid modification. Positions 162 to 187 (STSNIPNFFAIFGFLVLIIFILGDKI) are cleaved as a propeptide — removed in mature form.

Belongs to the ponticulin family. Post-translationally, the GPI-like-anchor contains a phosphoceramide group, rather than a phosphatidyl group.

The protein localises to the cell membrane. Its function is as follows. Binds F-actin and nucleates actin assembly. The polypeptide is Ponticulin-like protein K (ponK) (Dictyostelium discoideum (Social amoeba)).